Consider the following 86-residue polypeptide: Putative membrane protein insertion efficiency factor (86 aa).

This sequence belongs to the UPF0161 family.

The protein localises to the cell inner membrane. Functionally, could be involved in insertion of integral membrane proteins into the membrane. The chain is Putative membrane protein insertion efficiency factor from Pasteurella multocida (strain Pm70).